The primary structure comprises 121 residues: uncharacterized protein (121 aa).

The tract at residues 1–121 (MGQVLSICSS…QQEREQIKWD (121 aa)) is disordered. A lipid anchor (N-myristoyl glycine) is attached at G2. C8 carries the S-palmitoyl cysteine lipid modification. 4 stretches are compositionally biased toward basic and acidic residues: residues 11 to 23 (KSKE…EKPT), 73 to 83 (AAEKRNIEKKK), 90 to 105 (RQLE…EHLQ), and 112 to 121 (QQEREQIKWD).

The protein to yeast YGL108C. Myristoylated. In terms of processing, the N-myristoylated protein is further palmitoylated.

It is found in the cytoplasm. It localises to the cytosol. This is an uncharacterized protein from Schizosaccharomyces pombe (strain 972 / ATCC 24843) (Fission yeast).